A 277-amino-acid chain; its full sequence is Large ribosomal subunit protein uL2m (277 aa).

The segment at 225–263 (AMNPVDHPHGGGEGKTSGGRPSVTPWSWPTKGQPTRSKR) is disordered. The span at 248 to 259 (TPWSWPTKGQPT) shows a compositional bias: polar residues.

The protein belongs to the universal ribosomal protein uL2 family.

The protein resides in the mitochondrion. The sequence is that of Large ribosomal subunit protein uL2m (RPL2) from Reclinomonas americana.